Consider the following 220-residue polypeptide: Sericin-2 (220 aa).

Composition is skewed to low complexity over residues 1-131 (SSST…ASSS) and 141-155 (NESSSSSSSAAQNSA). The interval 1–220 (SSSTNNSSGS…SSSSSSWSSA (220 aa)) is disordered. Over residues 156 to 165 (TRSQVINADG) the composition is skewed to polar residues. Residues 166–220 (SQSSSSSSSSASNQASATSSSSVSADGSESESSSSSSSSSSSSSESSSSSSWSSA) show a composition bias toward low complexity.

As to expression, produced exclusively in the middle (MSG) section of silk glands.

It localises to the secreted. In terms of biological role, provides the silk fibroin thread with a sticky coating. Acts as a cement by sticking silk threads together. This Galleria mellonella (Greater wax moth) protein is Sericin-2 (SER2).